The primary structure comprises 37 residues: Photosystem I reaction center subunit VIII (37 aa).

The helical transmembrane segment at 9 to 29 (SILVTLVGLVFPAFAMASLFL) threads the bilayer.

This sequence belongs to the PsaI family.

It is found in the plastid. The protein resides in the chloroplast thylakoid membrane. In terms of biological role, may help in the organization of the PsaL subunit. This chain is Photosystem I reaction center subunit VIII, found in Pelargonium hortorum (Common geranium).